A 351-amino-acid chain; its full sequence is MNDSGNSSKVNVRPPSAGLGAPSPGKRKMLRLEVRNSQVPIERKPSWIRARATIGTEYRKVQERVKKQNLRTVCQEAGCPNIYECWEDREATFLIGGSQCTRRCDFCQIDTGKPAELDLDEPKRVGQSVAQMKLRYATVTGVARDDLPDGGVWLYAETIREIHKQCPGSGVEILIPDFNGKPELLQQIFEAQPEVYAHNIETVPRIFRRIRPAFRYDRSLDVISQGQKAGMITKSNLILGMGETGEEVTQALRDLKSAGCDIVTITQYLRPSPRHLPVARWVKPQEFIEYKEQAKEIGFSGVLAGPLVRSSYRAGKLWAQSVKAKMVEIPERVRKLINEIEMQETSFRQAV.

Positions 1–10 (MNDSGNSSKV) are enriched in polar residues. Residues 1 to 27 (MNDSGNSSKVNVRPPSAGLGAPSPGKR) form a disordered region. Residues 14–24 (PPSAGLGAPSP) show a composition bias toward low complexity. The [4Fe-4S] cluster site is built by cysteine 74, cysteine 79, cysteine 85, cysteine 100, cysteine 104, cysteine 107, and serine 311. A Radical SAM core domain is found at 86 to 300 (WEDREATFLI…KEQAKEIGFS (215 aa)).

Belongs to the radical SAM superfamily. Lipoyl synthase family. [4Fe-4S] cluster serves as cofactor.

Its subcellular location is the cytoplasm. The enzyme catalyses [[Fe-S] cluster scaffold protein carrying a second [4Fe-4S](2+) cluster] + N(6)-octanoyl-L-lysyl-[protein] + 2 oxidized [2Fe-2S]-[ferredoxin] + 2 S-adenosyl-L-methionine + 4 H(+) = [[Fe-S] cluster scaffold protein] + N(6)-[(R)-dihydrolipoyl]-L-lysyl-[protein] + 4 Fe(3+) + 2 hydrogen sulfide + 2 5'-deoxyadenosine + 2 L-methionine + 2 reduced [2Fe-2S]-[ferredoxin]. The protein operates within protein modification; protein lipoylation via endogenous pathway; protein N(6)-(lipoyl)lysine from octanoyl-[acyl-carrier-protein]: step 2/2. Catalyzes the radical-mediated insertion of two sulfur atoms into the C-6 and C-8 positions of the octanoyl moiety bound to the lipoyl domains of lipoate-dependent enzymes, thereby converting the octanoylated domains into lipoylated derivatives. This is Lipoyl synthase from Tropheryma whipplei (strain TW08/27) (Whipple's bacillus).